A 476-amino-acid chain; its full sequence is FAD-dependent monooxygenase prhF (476 aa).

FAD-binding residues include glutamate 41, glycine 55, and arginine 114. Residue tyrosine 222 is part of the active site. The FAD site is built by aspartate 314 and alanine 327. N-linked (GlcNAc...) asparagine glycosylation occurs at asparagine 343. Residues 447 to 467 (LGSTPIQMLTLLLPCLFYFMY) traverse the membrane as a helical segment. Asparagine 471 carries N-linked (GlcNAc...) asparagine glycosylation.

The protein belongs to the paxM FAD-dependent monooxygenase family. Requires FAD as cofactor.

Its subcellular location is the membrane. It functions in the pathway secondary metabolite biosynthesis; terpenoid biosynthesis. Functionally, FAD-dependent monooxygenase; part of the gene cluster that mediates the biosynthesis of paraherquonin, a meroterpenoid with a unique, highly congested hexacyclic molecular architecture. The first step of the pathway is the synthesis of 3,5-dimethylorsellinic acid (DMOA) by the polyketide synthase prhL. Synthesis of DMOA is followed by farnesylation by the prenyltransferase prhE, methylesterification by the methyl-transferase prhM, epoxidation of the prenyl chain by the flavin-dependent monooxygenase prhF, and cyclization of the farnesyl moiety by the terpene cyclase prhH, to yield the tetracyclic intermediate, protoaustinoid A. The short chain dehydrogenase prhI then oxidizes the C-3 alcohol group of the terpene cyclase product to transform protoaustinoid A into protoaustinoid B. The FAD-binding monooxygenase prhJ catalyzes the oxidation of protoaustinoid B into preaustinoid A which is further oxidized into preaustinoid A1 by FAD-binding monooxygenase phrK. Finally, prhA leads to berkeleydione via the berkeleyone B intermediate. PrhA is a multifunctional dioxygenase that first desaturates at C5-C6 to form berkeleyone B, followed by rearrangement of the A/B-ring to form the cycloheptadiene moiety in berkeleydione. Berkeleydione serves as the key intermediate for the biosynthesis of paraherquonin as well as many other meroterpenoids. The cytochrome P450 monooxygenases prhB, prhD, and prhN, as well as the isomerase prhC, are probably involved in the late stage of paraherquonin biosynthesis, after the production of berkeleydione. Especially prhC might be a multifunctional enzyme that catalyzes the D-ring expansion via intramolecular methoxy rearrangement, as well as the hydrolysis of the expanded D-ring. This is FAD-dependent monooxygenase prhF from Penicillium brasilianum.